We begin with the raw amino-acid sequence, 62 residues long: Conotoxin Im5.1 (62 aa).

An N-terminal signal peptide occupies residues 1 to 19 (MYCLPVFIILLLLISSAPS). Residues 20–48 (TPPQPRNKDRVHLISLLDNHKQILQRDWN) constitute a propeptide that is removed on maturation. Residue tryptophan 60 is modified to Tryptophan amide.

The protein belongs to the conotoxin T superfamily. Post-translationally, contains 2 disulfide bonds that can be either 'C1-C3, C2-C4' or 'C1-C4, C2-C3', since these disulfide connectivities have been observed for conotoxins with cysteine framework V (for examples, see AC P0DQQ7 and AC P81755). As to expression, expressed by the venom duct.

It localises to the secreted. The polypeptide is Conotoxin Im5.1 (Conus imperialis (Imperial cone)).